We begin with the raw amino-acid sequence, 594 residues long: UvrABC system protein C (594 aa).

The GIY-YIG domain occupies 13–99 (HSSGVYQYFD…IKQLKPKYNI (87 aa)). Positions 205–240 (DKLIKELELKMERLSNNLRFEEALIYRDRIAKIQKI) constitute a UVR domain.

Belongs to the UvrC family. In terms of assembly, interacts with UvrB in an incision complex.

Its subcellular location is the cytoplasm. The UvrABC repair system catalyzes the recognition and processing of DNA lesions. UvrC both incises the 5' and 3' sides of the lesion. The N-terminal half is responsible for the 3' incision and the C-terminal half is responsible for the 5' incision. In Helicobacter pylori (strain HPAG1), this protein is UvrABC system protein C.